Here is a 59-residue protein sequence, read N- to C-terminus: U-reduvitoxin-Pr6a (59 aa).

A signal peptide spans Met-1–Gly-19. Cystine bridges form between Cys-31-Cys-46, Cys-38-Cys-51, and Cys-45-Cys-58.

This sequence belongs to the venom Ptu1-like knottin family. In terms of tissue distribution, expressed by the venom gland.

The protein localises to the secreted. Its function is as follows. Binds reversibly and blocks P/Q-type voltage-gated calcium channels (Cav). This Platymeris rhadamanthus (Red spot assassin bug) protein is U-reduvitoxin-Pr6a.